Consider the following 340-residue polypeptide: Ornithine carbamoyltransferase (340 aa).

Carbamoyl phosphate is bound by residues Ser-57–Thr-60, Gln-84, Arg-108, and His-135–Gln-138. Residues Asn-167, Asp-231, and Ser-235–Met-236 contribute to the L-ornithine site. Carbamoyl phosphate contacts are provided by residues Cys-272 to Leu-273 and Arg-317.

It belongs to the aspartate/ornithine carbamoyltransferase superfamily. OTCase family.

The protein resides in the cytoplasm. The enzyme catalyses carbamoyl phosphate + L-ornithine = L-citrulline + phosphate + H(+). The protein operates within amino-acid biosynthesis; L-arginine biosynthesis; L-arginine from L-ornithine and carbamoyl phosphate: step 1/3. Reversibly catalyzes the transfer of the carbamoyl group from carbamoyl phosphate (CP) to the N(epsilon) atom of ornithine (ORN) to produce L-citrulline. This is Ornithine carbamoyltransferase (argF) from Lactiplantibacillus plantarum (strain ATCC BAA-793 / NCIMB 8826 / WCFS1) (Lactobacillus plantarum).